Here is a 643-residue protein sequence, read N- to C-terminus: Phosphomethylpyrimidine synthase (643 aa).

Residues asparagine 248, methionine 277, tyrosine 306, histidine 342, 362–364, 403–406, and glutamate 442 contribute to the substrate site; these read SRG and DGLR. Position 446 (histidine 446) interacts with Zn(2+). Residue tyrosine 469 participates in substrate binding. Histidine 510 is a Zn(2+) binding site. Cysteine 590, cysteine 593, and cysteine 598 together coordinate [4Fe-4S] cluster.

Belongs to the ThiC family. As to quaternary structure, homodimer. [4Fe-4S] cluster is required as a cofactor.

The enzyme catalyses 5-amino-1-(5-phospho-beta-D-ribosyl)imidazole + S-adenosyl-L-methionine = 4-amino-2-methyl-5-(phosphooxymethyl)pyrimidine + CO + 5'-deoxyadenosine + formate + L-methionine + 3 H(+). Its pathway is cofactor biosynthesis; thiamine diphosphate biosynthesis. Its function is as follows. Catalyzes the synthesis of the hydroxymethylpyrimidine phosphate (HMP-P) moiety of thiamine from aminoimidazole ribotide (AIR) in a radical S-adenosyl-L-methionine (SAM)-dependent reaction. The chain is Phosphomethylpyrimidine synthase from Burkholderia cenocepacia (strain HI2424).